The chain runs to 464 residues: ATP synthase subunit beta (464 aa).

Residue 153-160 (GGAGVGKT) participates in ATP binding.

The protein belongs to the ATPase alpha/beta chains family. F-type ATPases have 2 components, CF(1) - the catalytic core - and CF(0) - the membrane proton channel. CF(1) has five subunits: alpha(3), beta(3), gamma(1), delta(1), epsilon(1). CF(0) has three main subunits: a(1), b(2) and c(9-12). The alpha and beta chains form an alternating ring which encloses part of the gamma chain. CF(1) is attached to CF(0) by a central stalk formed by the gamma and epsilon chains, while a peripheral stalk is formed by the delta and b chains.

The protein localises to the cell inner membrane. It catalyses the reaction ATP + H2O + 4 H(+)(in) = ADP + phosphate + 5 H(+)(out). Its function is as follows. Produces ATP from ADP in the presence of a proton gradient across the membrane. The catalytic sites are hosted primarily by the beta subunits. This Burkholderia ambifaria (strain ATCC BAA-244 / DSM 16087 / CCUG 44356 / LMG 19182 / AMMD) (Burkholderia cepacia (strain AMMD)) protein is ATP synthase subunit beta.